The primary structure comprises 320 residues: MKPSVILYKKVADDLRARLDQHFTVTELDAFPALDHPALATAEGIIGSGGKVDKDFLQHAPRLRAASTISVGYDTFNVDALNEKGVILMHTPTVLTETVADTVLALMLASARRVVEVVERVKAGEWKGGVGSDWFGTDVHHKTIGILGMGRIGLAVAQRAHFGFSMPVLYNARRHHAEAEERFNARHCDLDTLLAESDFLCITLPLTAETHHLIGREQLAKMKPSAILINIGRGAVVDEDALTEALVKGTIQAAGLDVFVKEPLPVDSPLLDLPNVVALPHIGSATHETRYDMAACAVDNLIAALSGQVKENCVNPQVLK.

Catalysis depends on residues Arg233 and Glu262. His281 acts as the Proton donor in catalysis.

This sequence belongs to the D-isomer specific 2-hydroxyacid dehydrogenase family. GhrB subfamily. Homodimer.

Its subcellular location is the cytoplasm. It carries out the reaction glycolate + NADP(+) = glyoxylate + NADPH + H(+). It catalyses the reaction (R)-glycerate + NAD(+) = 3-hydroxypyruvate + NADH + H(+). The catalysed reaction is (R)-glycerate + NADP(+) = 3-hydroxypyruvate + NADPH + H(+). In terms of biological role, catalyzes the NADPH-dependent reduction of glyoxylate and hydroxypyruvate into glycolate and glycerate, respectively. The sequence is that of Glyoxylate/hydroxypyruvate reductase B from Pectobacterium atrosepticum (strain SCRI 1043 / ATCC BAA-672) (Erwinia carotovora subsp. atroseptica).